The chain runs to 174 residues: Achaete-scute homolog 3 (174 aa).

The interval 92–105 (AFIRKRNERERQRV) is basic motif. Positions 92 to 144 (AFIRKRNERERQRVKCVNEGYARLRRHLPEDYLEKRLSKVETLRAAIKYISYL) constitute a bHLH domain. The helix-loop-helix motif stretch occupies residues 106-144 (KCVNEGYARLRRHLPEDYLEKRLSKVETLRAAIKYISYL). A disordered region spans residues 153–174 (SETKKNPRTASCGSLDPALRVI).

In terms of assembly, efficient DNA binding requires dimerization with another bHLH protein. In terms of tissue distribution, expressed in the salivary duct cells. Also expressed at lower levels in testis and epididymis. Expressed in the olfactory epithelium (OE), in a subset of apical microvillar cells.

It localises to the nucleus. Functionally, transcriptional repressor. Inhibits myogenesis. Plays a role in progenitor cells which differentiate into ductal and acinar, but not myoepithelial, cell lineages in the salivary glands. Involved in the functions of the microvillar cells and Bowman's glands and probably, in a non-cell-autonomous manner, in the development or regeneration of a complete olfactory epithelium (OE). The sequence is that of Achaete-scute homolog 3 (Ascl3) from Mus musculus (Mouse).